The following is a 953-amino-acid chain: ATP-dependent 6-phosphofructokinase (953 aa).

The segment at 1–558 (MIEGISFASF…QLQGFLLTNS (558 aa)) is N-terminal catalytic PFK domain 1. ATP is bound by residues G193, 256 to 257 (RC), and 286 to 289 (GDGS). D287 contributes to the Mg(2+) binding site. Substrate contacts are provided by residues 332-334 (SID), R369, 376-378 (MGR), E433, R460, and 466-469 (HVQR). The Proton acceptor role is filled by D334. An interdomain linker region spans residues 559 to 572 (ADKDRPQEPAKDPL). Positions 573–953 (RVAIVCTGAP…AKEQGIIDPC (381 aa)) are C-terminal regulatory PFK domain 2. Residues R645, 702–706 (TISNN), R740, 747–749 (QGG), E807, R833, 839–842 (HVQQ), and R906 contribute to the beta-D-fructose 2,6-bisphosphate site.

The protein belongs to the phosphofructokinase type A (PFKA) family. ATP-dependent PFK group I subfamily. Eukaryotic two domain clade 'E' sub-subfamily. Heterooctamer of 4 alpha and 4 beta chains. It depends on Mg(2+) as a cofactor.

The protein resides in the cytoplasm. The enzyme catalyses beta-D-fructose 6-phosphate + ATP = beta-D-fructose 1,6-bisphosphate + ADP + H(+). Its pathway is carbohydrate degradation; glycolysis; D-glyceraldehyde 3-phosphate and glycerone phosphate from D-glucose: step 3/4. With respect to regulation, allosterically activated by ADP, AMP, or fructose 2,6-bisphosphate, and allosterically inhibited by ATP or citrate. Its function is as follows. Catalyzes the phosphorylation of D-fructose 6-phosphate to fructose 1,6-bisphosphate by ATP, the first committing step of glycolysis. This chain is ATP-dependent 6-phosphofructokinase (PFK1), found in Yarrowia lipolytica (strain CLIB 122 / E 150) (Yeast).